We begin with the raw amino-acid sequence, 278 residues long: tRNA uridine(34) hydroxylase (278 aa).

Residues 122–216 (QDPDVVVIDT…YLETIAPEES (95 aa)) form the Rhodanese domain. Cys176 functions as the Cysteine persulfide intermediate in the catalytic mechanism.

The protein belongs to the TrhO family.

It carries out the reaction uridine(34) in tRNA + AH2 + O2 = 5-hydroxyuridine(34) in tRNA + A + H2O. Its function is as follows. Catalyzes oxygen-dependent 5-hydroxyuridine (ho5U) modification at position 34 in tRNAs. The polypeptide is tRNA uridine(34) hydroxylase (Synechocystis sp. (strain ATCC 27184 / PCC 6803 / Kazusa)).